Reading from the N-terminus, the 2397-residue chain is Cell wall alpha-1,3-glucan synthase mok11 (2397 aa).

A disordered region spans residues 1683–1705; sequence SNQQSFDFKSSESDSFPQKSPSV. The span at 1687–1698 shows a compositional bias: low complexity; sequence SFDFKSSESDSF.

This sequence belongs to the glycosyltransferase group 1 family.

The enzyme catalyses [(1-&gt;3)-alpha-D-glucosyl](n) + UDP-alpha-D-glucose = [(1-&gt;3)-alpha-D-glucosyl](n+1) + UDP + H(+). This Schizosaccharomyces pombe (strain 972 / ATCC 24843) (Fission yeast) protein is Cell wall alpha-1,3-glucan synthase mok11 (mok11).